The primary structure comprises 63 residues: Large ribosomal subunit protein bL35 (63 aa).

Belongs to the bacterial ribosomal protein bL35 family.

The protein is Large ribosomal subunit protein bL35 of Campylobacter jejuni (strain RM1221).